The chain runs to 44 residues: Photosystem I reaction center subunit IX (44 aa).

A helical membrane pass occupies residues 7–27 (YLSTAPVLAISWLIFVAGLLI).

The protein belongs to the PsaJ family.

The protein localises to the plastid. Its subcellular location is the chloroplast thylakoid membrane. May help in the organization of the PsaE and PsaF subunits. The protein is Photosystem I reaction center subunit IX of Larix decidua (European larch).